The chain runs to 218 residues: Thiamine-phosphate synthase (218 aa).

Residues 43 to 47 (QFRDK) and N78 each bind 4-amino-2-methyl-5-(diphosphooxymethyl)pyrimidine. Residues D79 and D98 each contribute to the Mg(2+) site. A 4-amino-2-methyl-5-(diphosphooxymethyl)pyrimidine-binding site is contributed by S117. 2-[(2R,5Z)-2-carboxy-4-methylthiazol-5(2H)-ylidene]ethyl phosphate is bound at residue 143–145 (TNS). Position 146 (K146) interacts with 4-amino-2-methyl-5-(diphosphooxymethyl)pyrimidine. 2-[(2R,5Z)-2-carboxy-4-methylthiazol-5(2H)-ylidene]ethyl phosphate contacts are provided by residues G174 and 194–195 (IS).

This sequence belongs to the thiamine-phosphate synthase family. The cofactor is Mg(2+).

It carries out the reaction 2-[(2R,5Z)-2-carboxy-4-methylthiazol-5(2H)-ylidene]ethyl phosphate + 4-amino-2-methyl-5-(diphosphooxymethyl)pyrimidine + 2 H(+) = thiamine phosphate + CO2 + diphosphate. The enzyme catalyses 2-(2-carboxy-4-methylthiazol-5-yl)ethyl phosphate + 4-amino-2-methyl-5-(diphosphooxymethyl)pyrimidine + 2 H(+) = thiamine phosphate + CO2 + diphosphate. The catalysed reaction is 4-methyl-5-(2-phosphooxyethyl)-thiazole + 4-amino-2-methyl-5-(diphosphooxymethyl)pyrimidine + H(+) = thiamine phosphate + diphosphate. It participates in cofactor biosynthesis; thiamine diphosphate biosynthesis; thiamine phosphate from 4-amino-2-methyl-5-diphosphomethylpyrimidine and 4-methyl-5-(2-phosphoethyl)-thiazole: step 1/1. In terms of biological role, condenses 4-methyl-5-(beta-hydroxyethyl)thiazole monophosphate (THZ-P) and 2-methyl-4-amino-5-hydroxymethyl pyrimidine pyrophosphate (HMP-PP) to form thiamine monophosphate (TMP). The chain is Thiamine-phosphate synthase from Lactococcus lactis subsp. cremoris (strain MG1363).